The sequence spans 278 residues: Tryptophan synthase alpha chain (278 aa).

Active-site proton acceptor residues include glutamate 50 and aspartate 61.

This sequence belongs to the TrpA family. Tetramer of two alpha and two beta chains.

The enzyme catalyses (1S,2R)-1-C-(indol-3-yl)glycerol 3-phosphate + L-serine = D-glyceraldehyde 3-phosphate + L-tryptophan + H2O. Its pathway is amino-acid biosynthesis; L-tryptophan biosynthesis; L-tryptophan from chorismate: step 5/5. Functionally, the alpha subunit is responsible for the aldol cleavage of indoleglycerol phosphate to indole and glyceraldehyde 3-phosphate. The sequence is that of Tryptophan synthase alpha chain from Nitrobacter winogradskyi (strain ATCC 25391 / DSM 10237 / CIP 104748 / NCIMB 11846 / Nb-255).